The chain runs to 291 residues: Sulfotransferase 1A1 (291 aa).

A 3'-phosphoadenylyl sulfate-binding site is contributed by 44–49 (KSGTTW). 102–104 (KTH) lines the substrate pocket. His104 acts as the Proton acceptor in catalysis. 3'-phosphoadenylyl sulfate contacts are provided by residues Arg126, Ser134, Tyr189, 223–228 (TSFKKM), and 251–255 (FMRKG). Ser134 is modified (phosphoserine).

Belongs to the sulfotransferase 1 family. In terms of assembly, homodimer. The N-terminus is blocked. As to expression, liver, kidney, heart and colon.

The protein resides in the cytoplasm. The catalysed reaction is a phenol + 3'-phosphoadenylyl sulfate = an aryl sulfate + adenosine 3',5'-bisphosphate + H(+). It carries out the reaction 17beta-estradiol + 3'-phosphoadenylyl sulfate = 17beta-estradiol 3-sulfate + adenosine 3',5'-bisphosphate + H(+). The enzyme catalyses 4-ethylphenol + 3'-phosphoadenylyl sulfate = 4-ethylphenyl sulfate + adenosine 3',5'-bisphosphate + H(+). It catalyses the reaction 4-nitrophenol + 3'-phosphoadenylyl sulfate = 4-nitrophenyl sulfate + adenosine 3',5'-bisphosphate. The catalysed reaction is dopamine + 3'-phosphoadenylyl sulfate = dopamine 3-O-sulfate + adenosine 3',5'-bisphosphate + H(+). It carries out the reaction dopamine + 3'-phosphoadenylyl sulfate = dopamine 4-O-sulfate + adenosine 3',5'-bisphosphate + H(+). The enzyme catalyses 3,3',5-triiodo-L-thyronine + 3'-phosphoadenylyl sulfate = 3,3',5-triiodo-L-thyronine sulfate + adenosine 3',5'-bisphosphate + H(+). It catalyses the reaction 3,3',5'-triiodo-L-thyronine + 3'-phosphoadenylyl sulfate = 3,3',5'-triiodo-L-thyronine sulfate + adenosine 3',5'-bisphosphate + H(+). The catalysed reaction is 3,3'-diiodo-L-thyronine + 3'-phosphoadenylyl sulfate = 3,3'-diiodo-L-thyronine sulfate + adenosine 3',5'-bisphosphate + H(+). It carries out the reaction L-thyroxine + 3'-phosphoadenylyl sulfate = L-thyroxine sulfate + adenosine 3',5'-bisphosphate + H(+). Sulfotransferase that utilizes 3'-phospho-5'-adenylyl sulfate (PAPS) as sulfonate donor to catalyze the sulfate conjugation of a wide variety of acceptor molecules bearing a hydroxyl or an amine group. Sulfonation increases the water solubility of most compounds, and therefore their renal excretion, but it can also result in bioactivation to form active metabolites. Displays broad substrate specificity for small phenolic compounds. Plays an important roles in the sulfonation of endogenous molecules such as steroid hormones. Mediates the sulfate conjugation of a variety of xenobiotics, including the drugs acetaminophen and minoxidil. Mediates also the metabolic activation of carcinogenic N-hydroxyarylamines leading to highly reactive intermediates capable of forming DNA adducts, potentially resulting in mutagenesis. May play a role in gut microbiota-host metabolic interaction. O-sulfonates 4-ethylphenol (4-EP), a dietary tyrosine-derived metabolite produced by gut bacteria. The product 4-EPS crosses the blood-brain barrier and may negatively regulate oligodendrocyte maturation and myelination, affecting the functional connectivity of different brain regions associated with the limbic system. Catalyzes the sulfate conjugation of dopamine. Catalyzes the sulfation of T4 (L-thyroxine/3,5,3',5'-tetraiodothyronine), T3 (3,5,3'-triiodothyronine), rT3 (3,3',5'-triiodothyronine) and 3,3'-T2 (3,3'-diiodothyronine), with a substrate preference of 3,3'-T2 &gt; rT3 &gt; T3 &gt; T4. The sequence is that of Sulfotransferase 1A1 (Sult1a1) from Rattus norvegicus (Rat).